Reading from the N-terminus, the 497-residue chain is MSGDPGLEALKARVAEVPLGPEIEETGRIATLADGLVEVEGLPGARLGEVVRFAGGAEGLVLTLDPETVQVALLDPGAALGSGTEVRRTGQLLSVPVGQGLLGRVVDPLGRPLDGLPAILPEARLEIERPAPGIVDRDMVAEPVETGLLVVDALFAVGRGQRELIIGERATGKTSLAVDAIVNQAASDIVCFYVAIGQRTTAVRRVIETVREKGAFARTVFVVAPATASPGLRWIAPFAATSMAEWVRDRGGHALIVYDDLTKHAAVHRELALLARQPPGREAYPGDIFYLHARLLERSAKLSAVNGGGSLTALPIAEIEAGNLSAYIPTNLISIADGQIVTSAALFAANQRPAVDIGLSVSRVGGKAQRGALKAVAGRVRLDYAQYLEMKMFSRFGGFGDAALRARLARGERIGALLAQPRTTPLSTPVQVALLAALAEGALDDVPLEDLTRLKAALGPVLAADASLGPFCAAPDRLEPETRAALLACVRRAREAP.

167 to 174 is an ATP binding site; sequence GERATGKT.

Belongs to the ATPase alpha/beta chains family. In terms of assembly, F-type ATPases have 2 components, CF(1) - the catalytic core - and CF(0) - the membrane proton channel. CF(1) has five subunits: alpha(3), beta(3), gamma(1), delta(1), epsilon(1). CF(0) has four main subunits: a(1), b(1), b'(1) and c(9-12).

The protein resides in the cell inner membrane. The enzyme catalyses ATP + H2O + 4 H(+)(in) = ADP + phosphate + 5 H(+)(out). Its function is as follows. Produces ATP from ADP in the presence of a proton gradient across the membrane. The alpha chain is a regulatory subunit. This Cereibacter sphaeroides (strain ATCC 17029 / ATH 2.4.9) (Rhodobacter sphaeroides) protein is ATP synthase subunit alpha 2.